The sequence spans 207 residues: Abscisic acid receptor PYL9 (207 aa).

The tract at residues 31–197 (FPPSTTTATT…NLQMLAAVAE (167 aa)) is START-like. Abscisate-binding positions include Lys-74, 104–109 (ASTSTE), 131–137 (RLRNYRS), and Glu-162. The Gate loop signature appears at 100 to 104 (SGLPA). A Latch loop motif is present at residues 130-132 (HRL).

It belongs to the PYR/PYL/RCAR abscisic acid intracellular receptor family. As to quaternary structure, homodimer. Interacts with PP2C06. Interacts with PP2C50. Binding to PP2C50 is dependent on the presence of abscisic acid (ABA). Interacts with PP2C30 and PP2C53. Binding to PP2C30 and PP2C53 is dependent on the presence of ABA.

It is found in the cytoplasm. It localises to the cytosol. Its subcellular location is the nucleus. In terms of biological role, involved in abscisic acid (ABA) signaling during seed germination and abiotic stress response. Acts as a positive regulator of ABA-mediated inhibition of seed germination, and tolerance to drought and cold stresses. Inhibits the activity of the protein phosphatases PP2C06 and PP2C09 when activated by abscisic acid (ABA). This chain is Abscisic acid receptor PYL9, found in Oryza sativa subsp. japonica (Rice).